Consider the following 64-residue polypeptide: Conotoxin reg3k (64 aa).

An N-terminal signal peptide occupies residues 1–20 (MMFKLGVLLTICLLLFPLTA). The propeptide occupies 21–48 (LQLDWDQPGDHMLDISSEIDDRWFDPVR). 3 cysteine pairs are disulfide-bonded: cysteine 50–cysteine 60, cysteine 51–cysteine 58, and cysteine 56–cysteine 61. Proline 59 bears the 4-hydroxyproline mark.

As to expression, expressed by the venom duct.

The protein resides in the secreted. The polypeptide is Conotoxin reg3k (Conus regius (Crown cone)).